We begin with the raw amino-acid sequence, 210 residues long: Thymidylate kinase (210 aa).

Position 10 to 17 (10 to 17) interacts with ATP; it reads GLEGAGKS.

This sequence belongs to the thymidylate kinase family.

The enzyme catalyses dTMP + ATP = dTDP + ADP. Functionally, phosphorylation of dTMP to form dTDP in both de novo and salvage pathways of dTTP synthesis. The chain is Thymidylate kinase from Haemophilus influenzae (strain PittGG).